The chain runs to 193 residues: Ribosomal RNA large subunit methyltransferase E (193 aa).

S-adenosyl-L-methionine is bound by residues Gly-51, Trp-53, Asp-69, Asp-85, and Asp-108. The active-site Proton acceptor is the Lys-148.

The protein belongs to the class I-like SAM-binding methyltransferase superfamily. RNA methyltransferase RlmE family.

The protein localises to the cytoplasm. The enzyme catalyses uridine(2552) in 23S rRNA + S-adenosyl-L-methionine = 2'-O-methyluridine(2552) in 23S rRNA + S-adenosyl-L-homocysteine + H(+). Its function is as follows. Specifically methylates the uridine in position 2552 of 23S rRNA at the 2'-O position of the ribose in the fully assembled 50S ribosomal subunit. This is Ribosomal RNA large subunit methyltransferase E from Methanoregula boonei (strain DSM 21154 / JCM 14090 / 6A8).